The primary structure comprises 533 residues: Homeobox protein DTH-1 (533 aa).

Disordered stretches follow at residues 1 to 28 (MSSN…NECP) and 308 to 378 (LPQN…GKKR). The span at 8–19 (VKYDTNFDREGY) shows a compositional bias: basic and acidic residues. The span at 308–317 (LPQNLPNPNQ) shows a compositional bias: low complexity. Residues 318-333 (TDSIYSSSINENNQPI) are compositionally biased toward polar residues. A compositionally biased stretch (low complexity) spans 360 to 371 (SVENNDNENSSS). Positions 377 to 436 (KRKRRVLFSKKQILELERHFRQKKYLSAPEREHLANLIGLSPTQVKIWFQNHRYKMKRAH) form a DNA-binding region, homeobox.

The protein belongs to the NK-2 homeobox family. As to expression, intestine and unidentified peripheral parenchymal cells. Slightly higher levels in the cephalic region compared to other body regions.

The protein resides in the nucleus. In terms of biological role, this protein might be involved in determination and/or differentiation of nerve cells in the continuous replacement of neurons in the cephalic region. This chain is Homeobox protein DTH-1 (DTH-1), found in Girardia tigrina (Planarian).